A 457-amino-acid chain; its full sequence is Carboxypeptidase N catalytic chain (457 aa).

A signal peptide spans 1-23; it reads MPDLPSAFLPLLLLSKFVTPVTF. One can recognise a Peptidase M14 domain in the interval 24-338; it reads RHHRYDDLVR…EALIQFLEQV (315 aa). A disulfide bond links C42 and C104. Zn(2+) contacts are provided by H86, E89, and H216. A disulfide bond links C271 and C311. The active-site Proton donor/acceptor is E308. T400, T402, and T409 each carry an O-linked (GalNAc...) threonine glycan. A disordered region spans residues 418–457; the sequence is SSSQVYPVQRAPGRGQGGRAKQPRTSRKKDPATKRHRGPA.

This sequence belongs to the peptidase M14 family. Tetramer of two catalytic chains and two glycosylated inactive chains. Zn(2+) serves as cofactor. In terms of tissue distribution, mainly expressed in liver. Also detected in lung, stomach, intestine, spleen and kidney.

It localises to the secreted. The protein resides in the extracellular space. It carries out the reaction Release of a C-terminal basic amino acid, preferentially lysine.. In terms of biological role, protects the body from potent vasoactive and inflammatory peptides containing C-terminal Arg or Lys (such as kinins or anaphylatoxins) which are released into the circulation. In Mus musculus (Mouse), this protein is Carboxypeptidase N catalytic chain (Cpn1).